A 131-amino-acid chain; its full sequence is Proteinase inhibitor (131 aa).

The first 26 residues, 1 to 26 (MSASAKLSRMVCLLCGFFSTGISMAS), serve as a signal peptide directing secretion. A disulfide bridge links Cys-51 with Cys-74.

Belongs to the protease inhibitor I38 family.

It localises to the periplasm. Inhibitor of the alkaline protease. It forms a non-covalent bond with the protease and may prevent its autocatalytic cleavage in the periplasm. The protein is Proteinase inhibitor (inh) of Pseudomonas aeruginosa (strain ATCC 15692 / DSM 22644 / CIP 104116 / JCM 14847 / LMG 12228 / 1C / PRS 101 / PAO1).